Here is a 272-residue protein sequence, read N- to C-terminus: Imidazole glycerol phosphate synthase subunit HisF (272 aa).

Residues D11 and D130 contribute to the active site.

It belongs to the HisA/HisF family. In terms of assembly, heterodimer of HisH and HisF.

The protein resides in the cytoplasm. It catalyses the reaction 5-[(5-phospho-1-deoxy-D-ribulos-1-ylimino)methylamino]-1-(5-phospho-beta-D-ribosyl)imidazole-4-carboxamide + L-glutamine = D-erythro-1-(imidazol-4-yl)glycerol 3-phosphate + 5-amino-1-(5-phospho-beta-D-ribosyl)imidazole-4-carboxamide + L-glutamate + H(+). The protein operates within amino-acid biosynthesis; L-histidine biosynthesis; L-histidine from 5-phospho-alpha-D-ribose 1-diphosphate: step 5/9. IGPS catalyzes the conversion of PRFAR and glutamine to IGP, AICAR and glutamate. The HisF subunit catalyzes the cyclization activity that produces IGP and AICAR from PRFAR using the ammonia provided by the HisH subunit. The protein is Imidazole glycerol phosphate synthase subunit HisF of Methanococcus maripaludis (strain DSM 14266 / JCM 13030 / NBRC 101832 / S2 / LL).